The sequence spans 442 residues: 3-phosphoshikimate 1-carboxyvinyltransferase (442 aa).

Lysine 25, serine 26, and arginine 30 together coordinate 3-phosphoshikimate. Lysine 25 contributes to the phosphoenolpyruvate binding site. Positions 97 and 125 each coordinate phosphoenolpyruvate. Residues serine 170, glutamine 172, aspartate 323, and lysine 350 each coordinate 3-phosphoshikimate. Glutamine 172 serves as a coordination point for phosphoenolpyruvate. The active-site Proton acceptor is aspartate 323. Phosphoenolpyruvate contacts are provided by arginine 354 and arginine 399.

This sequence belongs to the EPSP synthase family. As to quaternary structure, monomer.

It is found in the cytoplasm. It catalyses the reaction 3-phosphoshikimate + phosphoenolpyruvate = 5-O-(1-carboxyvinyl)-3-phosphoshikimate + phosphate. Its pathway is metabolic intermediate biosynthesis; chorismate biosynthesis; chorismate from D-erythrose 4-phosphate and phosphoenolpyruvate: step 6/7. Catalyzes the transfer of the enolpyruvyl moiety of phosphoenolpyruvate (PEP) to the 5-hydroxyl of shikimate-3-phosphate (S3P) to produce enolpyruvyl shikimate-3-phosphate and inorganic phosphate. This is 3-phosphoshikimate 1-carboxyvinyltransferase from Bartonella quintana (strain Toulouse) (Rochalimaea quintana).